We begin with the raw amino-acid sequence, 298 residues long: Bifunctional protein FolD (298 aa).

NADP(+) is bound by residues 165–167 (GRS), S190, and I231.

This sequence belongs to the tetrahydrofolate dehydrogenase/cyclohydrolase family. As to quaternary structure, homodimer.

It catalyses the reaction (6R)-5,10-methylene-5,6,7,8-tetrahydrofolate + NADP(+) = (6R)-5,10-methenyltetrahydrofolate + NADPH. It carries out the reaction (6R)-5,10-methenyltetrahydrofolate + H2O = (6R)-10-formyltetrahydrofolate + H(+). Its pathway is one-carbon metabolism; tetrahydrofolate interconversion. Its function is as follows. Catalyzes the oxidation of 5,10-methylenetetrahydrofolate to 5,10-methenyltetrahydrofolate and then the hydrolysis of 5,10-methenyltetrahydrofolate to 10-formyltetrahydrofolate. The polypeptide is Bifunctional protein FolD (Prochlorococcus marinus (strain MIT 9312)).